The primary structure comprises 196 residues: ATP-dependent Clp protease proteolytic subunit (196 aa).

Ser-101 functions as the Nucleophile in the catalytic mechanism. His-126 is an active-site residue.

This sequence belongs to the peptidase S14 family. As to quaternary structure, component of the chloroplastic Clp protease core complex.

It localises to the plastid. Its subcellular location is the chloroplast stroma. The catalysed reaction is Hydrolysis of proteins to small peptides in the presence of ATP and magnesium. alpha-casein is the usual test substrate. In the absence of ATP, only oligopeptides shorter than five residues are hydrolyzed (such as succinyl-Leu-Tyr-|-NHMec, and Leu-Tyr-Leu-|-Tyr-Trp, in which cleavage of the -Tyr-|-Leu- and -Tyr-|-Trp bonds also occurs).. Its function is as follows. Cleaves peptides in various proteins in a process that requires ATP hydrolysis. Has a chymotrypsin-like activity. Plays a major role in the degradation of misfolded proteins. This is ATP-dependent Clp protease proteolytic subunit from Gossypium hirsutum (Upland cotton).